We begin with the raw amino-acid sequence, 743 residues long: Extensin-2 (743 aa).

The N-terminal stretch at 1-22 (MGPSAHLISALGVIIMATMVAA) is a signal peptide. The interval 46–93 (TPPLPYVDSSPPPTYTPAPEVEYKSPPPPYVYSSPPPPTYSPSPKVDY) is disordered. Composition is skewed to pro residues over residues 47–61 (PPLP…PTYT) and 70–86 (SPPP…PTYS). Tandem repeats lie at residues 70–78 (SPPPPYVYS), 79–94 (SPPP…VDYK), 95–103 (SPPPPYVYS), 104–119 (SPPP…VDYK), 120–128 (SPPPPYVYN), 129–144 (SPPP…VDYK), 145–153 (SPPPPYVYS), 154–169 (SPPP…VEYK), 170–178 (SPPPPYVYS), 179–194 (SPPP…VDYK), 195–203 (SPPPPYVYS), 204–219 (SPPP…VEYK), 220–228 (SPPPPYVYS), 229–244 (SPPP…VDYK), 245–253 (SPPPPYVYS), 254–269 (SPPP…VDYK), 270–278 (SPPPPYVYS), 279–294 (SPPP…VDYK), 295–303 (SPPPPYVYS), 304–319 (SPPP…VDYK), 320–328 (SPPPPYVYS), 329–344 (SPPP…VDYK), 345–353 (SPPPPYVYS), 354–369 (SPPP…VDYK), 370–378 (SPPPPYVYS), 379–394 (SPPP…VEYK), 395–403 (SPPPPYVYS), 404–419 (SPPP…VYYK), 420–428 (SPPPPYVYS), 429–444 (SPPP…VYYK), 445–453 (SPPPPYVYS), 454–469 (SPPP…VYYK), 470–478 (SPPPPYVYS), 479–494 (SPPP…VYYK), 495–503 (SPPPPYVYS), 504–519 (SPPP…VYYK), 520–528 (SPPPPYVYS), 529–544 (SPPP…VHYK), 545–553 (SPPPPYVYS), 554–569 (SPPP…VHYK), 570–578 (SPPPPYVYN), 579–594 (SPPP…VYYK), 595–603 (SPPPPYVYS), 604–619 (SPPP…VYYK), 620–628 (SPPPPYVYS), 629–644 (SPPP…VYYK), and 645–660 (SPPP…VYYK). The interval 70-628 (SPPPPYVYSS…KSPPPPYVYS (559 aa)) is 23 X 9 AA repeats of S-P-P-P-P-Y-V-Y-[SN]. The tract at residues 79–660 (SPPPPTYSPS…YSPSPKVYYK (582 aa)) is 24 X 16 AA repeats of S-P-P-P-P-[YT]-Y-S-P-S-P-K-V-[DEYH]-Y-K. The disordered stretch occupies residues 715–743 (PPSYYSPSPKVEYKSPPPPSYSPSPKTEY).

This sequence belongs to the extensin family. Post-translationally, extensins contain a characteristic repeat of the pentapeptide Ser-Pro(4). The proline residues are hydroxylated and then O-glycosylated (arabinosylation). In terms of processing, synthetised as soluble proteins which become insolubilised in the cell wall through the intermolecular cross-linking of Tyr on adjacent monomers. Isodityrosine (IDT) stabilizes and makes rigid the part of the polypeptide where IDT functional sites are present. As to expression, predominantly expressed in the roots.

The protein resides in the secreted. It is found in the primary cell wall. In terms of biological role, structural component which strengthens the primary cell wall. This is Extensin-2 from Arabidopsis thaliana (Mouse-ear cress).